Reading from the N-terminus, the 256-residue chain is PHD finger protein ALFIN-LIKE 6 (256 aa).

The disordered stretch occupies residues 144–200 (SKDLSVNNNNSKSKPSGVKSRQSESLSKVAKMSSPPPKEEEEEEDESEDESEDDEQG). Residues 146-163 (DLSVNNNNSKSKPSGVKS) are compositionally biased toward low complexity. The span at 182–199 (EEEEEEDESEDESEDDEQ) shows a compositional bias: acidic residues. The PHD-type zinc finger occupies 200 to 252 (GAVCGACGDNYGTDEFWICCDACEKWFHGKCVKITPAKAEHIKHYKCPTCSNK).

This sequence belongs to the Alfin family. In terms of assembly, interacts with H3K4me3 and to a lesser extent with H3K4me2. In terms of tissue distribution, ubiquitously expressed.

Its subcellular location is the nucleus. Histone-binding component that specifically recognizes H3 tails trimethylated on 'Lys-4' (H3K4me3), which mark transcription start sites of virtually all active genes. This Arabidopsis thaliana (Mouse-ear cress) protein is PHD finger protein ALFIN-LIKE 6 (AL6).